Here is an 89-residue protein sequence, read N- to C-terminus: Cell division topological specificity factor (89 aa).

It belongs to the MinE family.

Prevents the cell division inhibition by proteins MinC and MinD at internal division sites while permitting inhibition at polar sites. This ensures cell division at the proper site by restricting the formation of a division septum at the midpoint of the long axis of the cell. The protein is Cell division topological specificity factor of Edwardsiella ictaluri (strain 93-146).